A 309-amino-acid chain; its full sequence is Ribose-phosphate pyrophosphokinase (309 aa).

Residues 37–39 (DGE) and 96–97 (RQ) contribute to the ATP site. Mg(2+) contacts are provided by histidine 130 and aspartate 169. Residue lysine 192 is part of the active site. D-ribose 5-phosphate is bound by residues arginine 194, aspartate 218, and 222-226 (DTAGT).

Belongs to the ribose-phosphate pyrophosphokinase family. Class I subfamily. In terms of assembly, homohexamer. It depends on Mg(2+) as a cofactor.

It is found in the cytoplasm. The enzyme catalyses D-ribose 5-phosphate + ATP = 5-phospho-alpha-D-ribose 1-diphosphate + AMP + H(+). Its pathway is metabolic intermediate biosynthesis; 5-phospho-alpha-D-ribose 1-diphosphate biosynthesis; 5-phospho-alpha-D-ribose 1-diphosphate from D-ribose 5-phosphate (route I): step 1/1. Involved in the biosynthesis of the central metabolite phospho-alpha-D-ribosyl-1-pyrophosphate (PRPP) via the transfer of pyrophosphoryl group from ATP to 1-hydroxyl of ribose-5-phosphate (Rib-5-P). In Helicobacter hepaticus (strain ATCC 51449 / 3B1), this protein is Ribose-phosphate pyrophosphokinase.